The sequence spans 191 residues: 3-isopropylmalate dehydratase small subunit (191 aa).

This sequence belongs to the LeuD family. LeuD type 1 subfamily. Heterodimer of LeuC and LeuD.

The catalysed reaction is (2R,3S)-3-isopropylmalate = (2S)-2-isopropylmalate. The protein operates within amino-acid biosynthesis; L-leucine biosynthesis; L-leucine from 3-methyl-2-oxobutanoate: step 2/4. Its function is as follows. Catalyzes the isomerization between 2-isopropylmalate and 3-isopropylmalate, via the formation of 2-isopropylmaleate. This is 3-isopropylmalate dehydratase small subunit from Staphylococcus saprophyticus subsp. saprophyticus (strain ATCC 15305 / DSM 20229 / NCIMB 8711 / NCTC 7292 / S-41).